The sequence spans 235 residues: Protein Thf1 (235 aa).

Positions aspartate 183–valine 204 form a coiled coil. Residues aspartate 213–glutamate 235 are disordered. Polar residues predominate over residues glutamine 222–glutamate 235.

The protein belongs to the THF1 family.

In terms of biological role, may be involved in photosynthetic membrane biogenesis. The protein is Protein Thf1 of Nostoc punctiforme (strain ATCC 29133 / PCC 73102).